A 509-amino-acid chain; its full sequence is Dihydrolipoyl dehydrogenase, mitochondrial (509 aa).

The N-terminal 35 residues, Met-1–Tyr-35, are a transit peptide targeting the mitochondrion. At Lys-66 the chain carries N6-acetyllysine; alternate. Lys-66 carries the post-translational modification N6-succinyllysine; alternate. FAD is bound by residues Glu-71–Cys-80 and Lys-89. A disulfide bond links Cys-80 and Cys-85. Residues Lys-104, Lys-122, Lys-132, and Lys-143 each carry the N6-acetyllysine; alternate modification. Lys-104, Lys-122, Lys-132, and Lys-143 each carry N6-succinyllysine; alternate. Gly-154 lines the FAD pocket. An N6-succinyllysine modification is found at Lys-159. FAD is bound at residue Thr-183–Ser-185. Residues Gly-220–Glu-227 and Glu-243 each bind NAD(+). An N6-succinyllysine mark is found at Lys-273 and Lys-277. Val-278 contacts NAD(+). A phosphoserine mark is found at Ser-285 and Ser-297. Gly-314 provides a ligand contact to NAD(+). Lys-346 carries the post-translational modification N6-acetyllysine. Residues Asp-355 and Met-361–His-364 each bind FAD. N6-acetyllysine; alternate is present on Lys-410. At Lys-410 the chain carries N6-succinyllysine; alternate. An N6-acetyllysine mark is found at Lys-417 and Lys-420. An N6-succinyllysine modification is found at Lys-430. Catalysis depends on His-487, which acts as the Proton acceptor. Position 502 is a phosphoserine (Ser-502). Lys-505 bears the N6-acetyllysine; alternate mark. At Lys-505 the chain carries N6-succinyllysine; alternate.

This sequence belongs to the class-I pyridine nucleotide-disulfide oxidoreductase family. As to quaternary structure, homodimer. Part of the multimeric pyruvate dehydrogenase complex that contains multiple copies of pyruvate dehydrogenase (subunits PDHA (PDHA1 or PDHA2) and PDHB, E1), dihydrolipoamide acetyltransferase (DLAT, E2) and lipoamide dehydrogenase (DLD, E3). These subunits are bound to an inner core composed of about 48 DLAT and 12 PDHX molecules (by non covalent bonds). The 2-oxoglutarate dehydrogenase complex is composed of OGDH (2-oxoglutarate dehydrogenase; E1), DLST (dihydrolipoamide succinyltransferase; E2), DLD (dihydrolipoamide dehydrogenase; E3) and the assembly factor KGD4. It contains multiple copies of the three enzymatic components (E1, E2 and E3). In the nucleus, the 2-oxoglutarate dehydrogenase complex associates with KAT2A. Interacts with PDHX. FAD serves as cofactor. In terms of processing, tyrosine phosphorylated.

The protein localises to the mitochondrion matrix. It localises to the nucleus. It is found in the cell projection. The protein resides in the cilium. Its subcellular location is the flagellum. The protein localises to the cytoplasmic vesicle. It localises to the secretory vesicle. It is found in the acrosome. It carries out the reaction N(6)-[(R)-dihydrolipoyl]-L-lysyl-[protein] + NAD(+) = N(6)-[(R)-lipoyl]-L-lysyl-[protein] + NADH + H(+). Its function is as follows. Lipoamide dehydrogenase is a component of the glycine cleavage system as well as an E3 component of three alpha-ketoacid dehydrogenase complexes (pyruvate-, alpha-ketoglutarate-, and branched-chain amino acid-dehydrogenase complex). The 2-oxoglutarate dehydrogenase complex is mainly active in the mitochondrion. A fraction of the 2-oxoglutarate dehydrogenase complex also localizes in the nucleus and is required for lysine succinylation of histones: associates with KAT2A on chromatin and provides succinyl-CoA to histone succinyltransferase KAT2A. In monomeric form may have additional moonlighting function as serine protease. Involved in the hyperactivation of spermatazoa during capacitation and in the spermatazoal acrosome reaction. This Rattus norvegicus (Rat) protein is Dihydrolipoyl dehydrogenase, mitochondrial (Dld).